The primary structure comprises 492 residues: RNA-binding protein Nova-2 (492 aa).

The short motif at 10-26 (KRPLETPPEVVCTKRSN) is the Bipartite nuclear localization signal element. The KH 1 domain occupies 32-99 (EYFLKVLIPS…EALNAVHSFI (68 aa)). A Glycyl lysine isopeptide (Lys-Gly) (interchain with G-Cter in SUMO2) cross-link involves residue Lys112. KH domains lie at 130 to 196 (AKQA…VSAI) and 406 to 473 (KELV…QYLI).

In terms of assembly, interacts with PTBP2; the interaction is direct. In terms of tissue distribution, brain. Expression restricted to astrocytes.

The protein localises to the nucleus. Functionally, functions to regulate alternative splicing in neurons by binding pre-mRNA in a sequence-specific manner to activate exon inclusion or exclusion. It binds specifically to the sequences 5'-YCAY-3' and regulates splicing in only a subset of regulated exons. Binding to an exonic 5'-YCAY-3' cluster changes the protein complexes assembled on pre-mRNA, blocking U1 snRNP binding and exon inclusion, whereas binding to an intronic 5'-YCAY-3' cluster enhances spliceosome assembly and exon inclusion. With NOVA1, they perform unique biological functions in different brain areas and cell types. Uniquely regulates alternative splicing events of a series of axon guidance related genes during cortical development, being essential for central nervous system development by regulating neural networks wiring. Regulates differentially alternative splicing on the same transcripts expressed in different neurons. This includes functional differences in transcripts expressed in cortical and cerebellar excitatory versus inhibitory neurons where is required for, respectively, development of laminar structure and motor coordination and synapse formation. Also the regulation the regulation of intron retention can sequester the trans-acting splicing factor PTBP2, acting as a variable cis-acting scaffolding platform for PTBP2 across various natural conditions. In Homo sapiens (Human), this protein is RNA-binding protein Nova-2.